Consider the following 335-residue polypeptide: Cathepsin B-like cysteine proteinase 4 (335 aa).

The first 15 residues, 1–15 (MKYLILAALVAVTAG), serve as a signal peptide directing secretion. Positions 16–80 (LVIPLVPKTQ…VVKHDINEDT (65 aa)) are excised as a propeptide. Disulfide bonds link Cys94–Cys123, Cys106–Cys150, Cys142–Cys209, Cys143–Cys146, Cys179–Cys213, and Cys187–Cys199. Residue Cys109 is part of the active site. The N-linked (GlcNAc...) asparagine glycan is linked to Asn193. Active-site residues include His281 and Asn301.

This sequence belongs to the peptidase C1 family.

Its subcellular location is the secreted. In terms of biological role, thiol protease which shows activity against the fluorogenic substrate z-Arg-Arg-AMC. The polypeptide is Cathepsin B-like cysteine proteinase 4 (cpr-4) (Caenorhabditis elegans).